A 149-amino-acid chain; its full sequence is Large ribosomal subunit protein uL22c (149 aa).

It belongs to the universal ribosomal protein uL22 family. Part of the 50S ribosomal subunit.

It is found in the plastid. The protein resides in the chloroplast. Functionally, this protein binds specifically to 23S rRNA. In terms of biological role, the globular domain of the protein is located near the polypeptide exit tunnel on the outside of the subunit, while an extended beta-hairpin is found that lines the wall of the exit tunnel in the center of the 70S ribosome. The chain is Large ribosomal subunit protein uL22c (rpl22-A) from Pelargonium hortorum (Common geranium).